Here is a 256-residue protein sequence, read N- to C-terminus: Small ribosomal subunit protein eS1A (256 aa).

A2 is modified (N-acetylalanine; partial).

It belongs to the eukaryotic ribosomal protein eS1 family. As to quaternary structure, component of the small ribosomal subunit. Mature ribosomes consist of a small (40S) and a large (60S) subunit. The 40S subunit contains about 33 different proteins and 1 molecule of RNA (18S). The 60S subunit contains about 49 different proteins and 3 molecules of RNA (25S, 5.8S and 5S).

The protein resides in the cytoplasm. The sequence is that of Small ribosomal subunit protein eS1A from Scheffersomyces stipitis (strain ATCC 58785 / CBS 6054 / NBRC 10063 / NRRL Y-11545) (Yeast).